A 269-amino-acid polypeptide reads, in one-letter code: Probable cytochrome c oxidase subunit 2 (269 aa).

The next 3 membrane-spanning stretches (helical) occupy residues 8-28, 50-70, and 87-107; these read ITLI…PLPW, LLYI…FVCI, and ILIE…IAVP. Cu cation-binding residues include H189, C224, C228, and H232.

Belongs to the cytochrome c oxidase subunit 2 family. Cu cation serves as cofactor. It depends on heme as a cofactor.

The protein localises to the cell membrane. The catalysed reaction is 4 Fe(II)-[cytochrome c] + O2 + 8 H(+)(in) = 4 Fe(III)-[cytochrome c] + 2 H2O + 4 H(+)(out). In terms of biological role, subunits I and II form the functional core of the enzyme complex. Electrons originating in cytochrome c are transferred via heme a and Cu(A) to the binuclear center formed by heme a3 and Cu(B). This Rickettsia bellii (strain RML369-C) protein is Probable cytochrome c oxidase subunit 2 (ctaC).